We begin with the raw amino-acid sequence, 324 residues long: NAC domain-containing protein 21/22 (324 aa).

One can recognise an NAC domain in the interval 19–171 (LPPGFRFHPK…DWVLCRVFHK (153 aa)). The Bipartite nuclear localization signal signature appears at 120-137 (RKTLVFYQGRAPRGRKTD).

As to quaternary structure, dimer. Interacts with SINAT5. Post-translationally, ubiquitinated. The interaction with SINAT5 mediate its proteasome-dependent degradation. In terms of tissue distribution, predominantly expressed in the root tip and in lateral root initiation sites. Also detected in expanding cotyledon, and in leaf primordia.

It is found in the nucleus. Functionally, transcriptional activator that mediates auxin signaling to promote lateral root development. Activates the expression of two downstream auxin-responsive genes, DBP and AIR3. The chain is NAC domain-containing protein 21/22 (NAC021) from Arabidopsis thaliana (Mouse-ear cress).